The primary structure comprises 426 residues: Dihydroorotase (426 aa).

Zn(2+)-binding residues include His-58 and His-60. Substrate contacts are provided by residues 60–62 (HLR) and Asn-92. Asp-150, His-177, and His-230 together coordinate Zn(2+). Substrate is bound at residue Asn-276. Asp-303 lines the Zn(2+) pocket. Asp-303 is a catalytic residue. Substrate contacts are provided by residues His-307 and 321–322 (FG).

Belongs to the metallo-dependent hydrolases superfamily. DHOase family. Class I DHOase subfamily. Requires Zn(2+) as cofactor.

The enzyme catalyses (S)-dihydroorotate + H2O = N-carbamoyl-L-aspartate + H(+). It functions in the pathway pyrimidine metabolism; UMP biosynthesis via de novo pathway; (S)-dihydroorotate from bicarbonate: step 3/3. Catalyzes the reversible cyclization of carbamoyl aspartate to dihydroorotate. The chain is Dihydroorotase from Listeria innocua serovar 6a (strain ATCC BAA-680 / CLIP 11262).